The following is a 616-amino-acid chain: Dihydroxy-acid dehydratase (616 aa).

A Mg(2+)-binding site is contributed by Asp-81. Cys-122 lines the [2Fe-2S] cluster pocket. Mg(2+) is bound by residues Asp-123 and Lys-124. At Lys-124 the chain carries N6-carboxylysine. Cys-195 lines the [2Fe-2S] cluster pocket. Glu-491 serves as a coordination point for Mg(2+). Ser-517 (proton acceptor) is an active-site residue.

This sequence belongs to the IlvD/Edd family. In terms of assembly, homodimer. The cofactor is [2Fe-2S] cluster. Mg(2+) is required as a cofactor.

The catalysed reaction is (2R)-2,3-dihydroxy-3-methylbutanoate = 3-methyl-2-oxobutanoate + H2O. The enzyme catalyses (2R,3R)-2,3-dihydroxy-3-methylpentanoate = (S)-3-methyl-2-oxopentanoate + H2O. The protein operates within amino-acid biosynthesis; L-isoleucine biosynthesis; L-isoleucine from 2-oxobutanoate: step 3/4. It participates in amino-acid biosynthesis; L-valine biosynthesis; L-valine from pyruvate: step 3/4. Its function is as follows. Functions in the biosynthesis of branched-chain amino acids. Catalyzes the dehydration of (2R,3R)-2,3-dihydroxy-3-methylpentanoate (2,3-dihydroxy-3-methylvalerate) into 2-oxo-3-methylpentanoate (2-oxo-3-methylvalerate) and of (2R)-2,3-dihydroxy-3-methylbutanoate (2,3-dihydroxyisovalerate) into 2-oxo-3-methylbutanoate (2-oxoisovalerate), the penultimate precursor to L-isoleucine and L-valine, respectively. The polypeptide is Dihydroxy-acid dehydratase (Salmonella paratyphi C (strain RKS4594)).